The chain runs to 559 residues: Spermidine/putrescine import ATP-binding protein PotA (559 aa).

The ABC transporter domain maps to 7 to 448; that stretch reads IEIEGLNKTF…PKTEWIANFI (442 aa). Position 40–47 (40–47) interacts with ATP; that stretch reads GPSGCGKT. An insert region spans residues 108–317; it reads WTKLDEIPKL…EAFEKRYLSR (210 aa).

This sequence belongs to the ABC transporter superfamily. Spermidine/putrescine importer (TC 3.A.1.11.1) family. In terms of assembly, the complex is composed of two ATP-binding proteins (PotA), two transmembrane proteins (PotB and PotC) and a solute-binding protein (PotD).

The protein localises to the cell membrane. It catalyses the reaction ATP + H2O + polyamine-[polyamine-binding protein]Side 1 = ADP + phosphate + polyamineSide 2 + [polyamine-binding protein]Side 1.. In terms of biological role, part of the ABC transporter complex PotABCD involved in spermidine/putrescine import. Responsible for energy coupling to the transport system. The sequence is that of Spermidine/putrescine import ATP-binding protein PotA from Mycoplasma genitalium (strain ATCC 33530 / DSM 19775 / NCTC 10195 / G37) (Mycoplasmoides genitalium).